Consider the following 284-residue polypeptide: RNase adapter protein RapZ (284 aa).

Position 8–15 (8–15 (GRSGSGKS)) interacts with ATP. 56-59 (DVRN) serves as a coordination point for GTP. Positions 266 to 284 (RSRGKNVQSRHRTLEKRKP) are RNA-binding.

It belongs to the RapZ-like family. RapZ subfamily. Homotrimer.

Functionally, modulates the synthesis of GlmS, by affecting the processing and stability of the regulatory small RNA GlmZ. When glucosamine-6-phosphate (GlcN6P) concentrations are high in the cell, RapZ binds GlmZ and targets it to cleavage by RNase E. Consequently, GlmZ is inactivated and unable to activate GlmS synthesis. Under low GlcN6P concentrations, RapZ is sequestered and inactivated by an other regulatory small RNA, GlmY, preventing GlmZ degradation and leading to synthesis of GlmS. The protein is RNase adapter protein RapZ of Shigella dysenteriae serotype 1 (strain Sd197).